Reading from the N-terminus, the 203-residue chain is Guanylate kinase (203 aa).

Residues 3 to 181 (GTLYVVSAPS…TLADLQAIFT (179 aa)) enclose the Guanylate kinase-like domain. 10-17 (APSGAGKT) lines the ATP pocket.

It belongs to the guanylate kinase family.

The protein resides in the cytoplasm. It carries out the reaction GMP + ATP = GDP + ADP. In terms of biological role, essential for recycling GMP and indirectly, cGMP. The protein is Guanylate kinase of Alkalilimnicola ehrlichii (strain ATCC BAA-1101 / DSM 17681 / MLHE-1).